Reading from the N-terminus, the 156-residue chain is Small ribosomal subunit protein uS7 (156 aa).

This sequence belongs to the universal ribosomal protein uS7 family. Part of the 30S ribosomal subunit. Contacts proteins S9 and S11.

One of the primary rRNA binding proteins, it binds directly to 16S rRNA where it nucleates assembly of the head domain of the 30S subunit. Is located at the subunit interface close to the decoding center, probably blocks exit of the E-site tRNA. The protein is Small ribosomal subunit protein uS7 of Pelobacter propionicus (strain DSM 2379 / NBRC 103807 / OttBd1).